We begin with the raw amino-acid sequence, 553 residues long: Sensitive to high expression protein 9 homolog, mitochondrial (553 aa).

The tract at residues 61–174 is disordered; sequence FFSTQPPKDT…TAQPELPSRT (114 aa). Positions 62–84 are enriched in polar residues; it reads FSTQPPKDTPENMNNKETGSSNV. Residues 103-116 are compositionally biased toward basic and acidic residues; that stretch reads AKEDTTDATNKSET. Residues 133 to 160 show a composition bias toward low complexity; that stretch reads SDVSSASTSDSANSSETTTTTSETTPEN. 2 coiled-coil regions span residues 210–241 and 277–309; these read SAIE…HNYK and RLDH…DLNA. A helical transmembrane segment spans residues 331-351; it reads WGTWGLMGVNVLLFLVLQFVA. Over 352-523 the chain is Mitochondrial intermembrane; sequence EPWRRKRLMK…RIDLKMRDVS (172 aa). Disordered regions lie at residues 408–428 and 443–497; these read ALAS…RTEG and AEEA…QTLS. Composition is skewed to low complexity over residues 443–473 and 484–495; these read AEEA…QTPE and TWKQTAQKWQQT. A helical membrane pass occupies residues 524 to 544; it reads LLALESAATGAAVVASVAFFV. The Mitochondrial matrix segment spans residues 545-553; that stretch reads LRSSGSGKA.

The protein belongs to the SHE9 family. Homooligomer.

It localises to the mitochondrion inner membrane. Its function is as follows. Required for the maintenance of the structure of the mitochondrial inner membrane. Involved in mitochondrial morphology. Causes growth arrest when highly overexpressed. The polypeptide is Sensitive to high expression protein 9 homolog, mitochondrial (she-9) (Neurospora crassa (strain ATCC 24698 / 74-OR23-1A / CBS 708.71 / DSM 1257 / FGSC 987)).